The primary structure comprises 303 residues: Haloalkane dehalogenase (303 aa).

The 145-residue stretch at Pro-48–Val-192 folds into the AB hydrolase-1 domain. Asp-123 acts as the Nucleophile in catalysis. The active-site Proton donor is Asp-250. His-280 functions as the Proton acceptor in the catalytic mechanism.

The protein belongs to the haloalkane dehalogenase family. Type 1 subfamily. In terms of assembly, monomer.

It catalyses the reaction 1-haloalkane + H2O = a halide anion + a primary alcohol + H(+). Its function is as follows. Catalyzes hydrolytic cleavage of carbon-halogen bonds in halogenated aliphatic compounds, leading to the formation of the corresponding primary alcohols, halide ions and protons. In Psychrobacter cryohalolentis (strain ATCC BAA-1226 / DSM 17306 / VKM B-2378 / K5), this protein is Haloalkane dehalogenase.